Consider the following 83-residue polypeptide: uncharacterized protein (83 aa).

2 helical membrane-spanning segments follow: residues 23-43 (GGCY…SAIA) and 49-69 (SLWW…VVYG).

The protein resides in the cell membrane. This is an uncharacterized protein from Mycobacterium tuberculosis (strain CDC 1551 / Oshkosh).